The sequence spans 173 residues: ATP synthase subunit b (173 aa).

A helical membrane pass occupies residues 20-40 (IIATLAIFLVLMFLLKKVAWG).

This sequence belongs to the ATPase B chain family. F-type ATPases have 2 components, F(1) - the catalytic core - and F(0) - the membrane proton channel. F(1) has five subunits: alpha(3), beta(3), gamma(1), delta(1), epsilon(1). F(0) has three main subunits: a(1), b(2) and c(10-14). The alpha and beta chains form an alternating ring which encloses part of the gamma chain. F(1) is attached to F(0) by a central stalk formed by the gamma and epsilon chains, while a peripheral stalk is formed by the delta and b chains.

It localises to the cell membrane. In terms of biological role, f(1)F(0) ATP synthase produces ATP from ADP in the presence of a proton or sodium gradient. F-type ATPases consist of two structural domains, F(1) containing the extramembraneous catalytic core and F(0) containing the membrane proton channel, linked together by a central stalk and a peripheral stalk. During catalysis, ATP synthesis in the catalytic domain of F(1) is coupled via a rotary mechanism of the central stalk subunits to proton translocation. Component of the F(0) channel, it forms part of the peripheral stalk, linking F(1) to F(0). The polypeptide is ATP synthase subunit b (Lysinibacillus sphaericus (strain C3-41)).